A 235-amino-acid polypeptide reads, in one-letter code: Thaumatin II (235 aa).

A signal peptide spans 1-22; the sequence is MAATTCFFFLFPFLLLLTLSRA. 8 cysteine pairs are disulfide-bonded: Cys-31–Cys-226, Cys-78–Cys-88, Cys-93–Cys-99, Cys-143–Cys-215, Cys-148–Cys-199, Cys-156–Cys-167, Cys-171–Cys-180, and Cys-181–Cys-186. Residues 230 to 235 constitute a propeptide, removed in mature form; sequence LELEDE.

It belongs to the thaumatin family.

It is found in the cytoplasmic vesicle. In terms of biological role, taste-modifying protein; intensely sweet-tasting. It is 100000 times sweeter than sucrose on a molar basis. The polypeptide is Thaumatin II (Thaumatococcus daniellii (Katemfe)).